A 404-amino-acid chain; its full sequence is Probable pectate lyase 18 (404 aa).

Residues 1–20 (MSTLFFTFSLLLLAPLLVIS) form the signal peptide. N-linked (GlcNAc...) asparagine glycosylation is present at N37. An intrachain disulfide couples C159 to C178. The N-linked (GlcNAc...) asparagine glycan is linked to N191. 4 residues coordinate Ca(2+): D200, D202, D224, and D228. R280 is a catalytic residue.

Belongs to the polysaccharide lyase 1 family. It depends on Ca(2+) as a cofactor. In terms of tissue distribution, predominantly found in the pistil where it is found in the outer five layers of the strands of transmitting tissue within the upper two-thirds of the style. Found at much lower levels in the anthers and vegetative organs.

The protein resides in the secreted. It carries out the reaction Eliminative cleavage of (1-&gt;4)-alpha-D-galacturonan to give oligosaccharides with 4-deoxy-alpha-D-galact-4-enuronosyl groups at their non-reducing ends.. The protein operates within glycan metabolism; pectin degradation; 2-dehydro-3-deoxy-D-gluconate from pectin: step 2/5. May have a role in the development of the transmitting tissue of the style and/or in the events related to pollination such as some aspect in the facilitation of compatible pollen tube growth. The polypeptide is Probable pectate lyase 18 (Solanum lycopersicum (Tomato)).